A 148-amino-acid polypeptide reads, in one-letter code: Proteasome chaperone 4 (148 aa).

Belongs to the PSMG4 family. In terms of assembly, component of the 20S proteasome chaperone. Forms a heterodimer with IRC25 that binds to proteasome precursors. Interacts with POP2.

Its subcellular location is the cytoplasm. Its function is as follows. Involved in 20S proteasome assembly, facilitating the alpha-ring formation. Involved in maintenance of telomere length. The sequence is that of Proteasome chaperone 4 (POC4) from Saccharomyces cerevisiae (strain ATCC 204508 / S288c) (Baker's yeast).